A 250-amino-acid polypeptide reads, in one-letter code: MVLASNHSNIEIKSDIPLINSMESYSLDKNMSNSIISTNLNDFSNWARLSSLWPLLYGTSCCFIEFASLIGSRFDFDRYGLVPRSSPRQADLIITAGTVTMKMAPSLVRLYEQMPEPKYVIAMGACTITGGMFSTDSYSTVRGIDKLIPVDVYLPGCPPKPEAIIDAIIKLRKKVAQETYRDRTKNKRENRFFTSNHQFKFVPSIHTGQYISDQSSIPLLDLPLERTISEMRFDNKFFMNEEELLPKGRK.

[4Fe-4S] cluster-binding residues include C61, C62, C126, and C157.

This sequence belongs to the complex I 20 kDa subunit family. In terms of assembly, NDH is composed of at least 16 different subunits, 5 of which are encoded in the nucleus. It depends on [4Fe-4S] cluster as a cofactor.

It is found in the plastid. Its subcellular location is the chloroplast thylakoid membrane. It catalyses the reaction a plastoquinone + NADH + (n+1) H(+)(in) = a plastoquinol + NAD(+) + n H(+)(out). It carries out the reaction a plastoquinone + NADPH + (n+1) H(+)(in) = a plastoquinol + NADP(+) + n H(+)(out). In terms of biological role, NDH shuttles electrons from NAD(P)H:plastoquinone, via FMN and iron-sulfur (Fe-S) centers, to quinones in the photosynthetic chain and possibly in a chloroplast respiratory chain. The immediate electron acceptor for the enzyme in this species is believed to be plastoquinone. Couples the redox reaction to proton translocation, and thus conserves the redox energy in a proton gradient. In Angiopteris evecta (Mule's foot fern), this protein is NAD(P)H-quinone oxidoreductase subunit K, chloroplastic.